The following is a 773-amino-acid chain: MIPRRHHFKPAPQPTVQVLQPPDEDAPSLTITMLGAGQEVGRSCCVIEHRGKKIVCDAGLHPAQPGIGALPFIDELDWSTVDAMLITHFHVDHAAALPYIMEKTNFKDGNGKVYMTHATKAIYGLTMMDTVRLNDQNPDTSGRLYDEADVQSSWQSTIAVDYHQDIVIAGGLRFTPYHAGHVLGASMFLIEIAGLKILYTGDYSREEDRHLVMAEIPPVKPDVMICESTFGVHTLPDRKEKEEQFTTLVANIVRRGGRCLMPIPSFGNGQELALLLDEYWNDHPELQNIPVYFASSLFQRGMRVYKTYVHTMNANIRSRFARRDNPFDFRFVKWLKDPQKLRENKGPCVIMSSPQFMSFGLSRDLLEEWAPDSKNGVIVTGYSIEGTMARTLLSEPDHIESLKGGNVPRRLTVKEISFGAHVDYAQNSKFIQEIGAQHVVLVHGEASQMGRLRAALRDTYAAKGQEINIHTPKNCEPLTLTFRQERMVKAIGSLAATRPEHGTSVKGLLVSKDFSYTLLSPADLHDFTGLSTSTIIQKQGVAISVDWAVVRWYLEGMYGEVEEGVEEEGKAAFIIMNGVQVVQISPTAVELRWKSSSSNDMIADSALALLLGIDGSPATAKLTASPNKHACNHSNSHSHTDLYPHTYPGDKSAKDVASNPEFERLRMFLEAHFGHVEGPNLRPPLPPGADGDGNDDKDKDGDDWLTMDVKLDNQTARIDLISMRVESESAELQKRVETVLEMALTTVKSLSQTFLGGGLDVDMVKVEPNESDS.

The segment at 1-22 (MIPRRHHFKPAPQPTVQVLQPP) is disordered. The Zn(2+) site is built by His88, His90, Asp92, His93, His181, and Asp202. The active-site Proton donor is the His421. His443 serves as a coordination point for Zn(2+). Over residues 624 to 637 (ASPNKHACNHSNSH) the composition is skewed to polar residues. Disordered regions lie at residues 624 to 656 (ASPN…AKDV) and 677 to 702 (EGPN…KDGD).

This sequence belongs to the metallo-beta-lactamase superfamily. RNA-metabolizing metallo-beta-lactamase-like family. CPSF2/YSH1 subfamily.

It is found in the nucleus. Functionally, component of the cleavage factor I (CF I) involved in pre-mRNA 3'-end processing. This is Endoribonuclease YSH1 (YSH1) from Cryptococcus neoformans var. neoformans serotype D (strain B-3501A) (Filobasidiella neoformans).